A 409-amino-acid polypeptide reads, in one-letter code: Secreted LysM effector Blys2 (409 aa).

The first 20 residues, 1–20, serve as a signal peptide directing secretion; sequence MTRFTTTLVAALAGANLAAA. One can recognise a LysM 1 domain in the interval 24–71; sequence YKWRAHAGDTCDSLSSDWSVQVSDFIKWNPSVGANCSNGVTAGQEYCV. Asn58 is a glycosylation site (N-linked (GlcNAc...) asparagine). The interval 74-111 is disordered; that stretch reads NGAGSKPTTPPTGSPTTLTTAVTTASSTPTQPTDGAPS. The segment covering 87–106 has biased composition (low complexity); the sequence is SPTTLTTAVTTASSTPTQPT. 4 LysM domains span residues 129-176, 206-253, 283-330, and 357-405; these read AWYK…YVCV, KWYK…FVCV, KFYK…YYCI, and KYYK…YICV.

Belongs to the secreted LysM effector family.

Its subcellular location is the secreted. It is found in the cell wall. In terms of biological role, secreted effector that enables the plant pathogenic fungus to manipulate host defenses for successful infection. Required for the full virulence to infect insect hosts. In contrast to Blys5, Blys2 is not able to protect fungal hyphae against the hydrolytic activity of chitinase but plays an important role in evasion of insect immunities. Binds chitin. Coats and protects the cell walls of insect pathogens from host cell recognition. In Beauveria bassiana (strain ARSEF 2860) (White muscardine disease fungus), this protein is Secreted LysM effector Blys2.